Here is a 320-residue protein sequence, read N- to C-terminus: UDP-3-O-acyl-N-acetylglucosamine deacetylase (320 aa).

Zn(2+) is bound by residues His-92, His-251, and Asp-255. The active-site Proton donor is the His-278.

It belongs to the LpxC family. Zn(2+) is required as a cofactor.

It carries out the reaction a UDP-3-O-[(3R)-3-hydroxyacyl]-N-acetyl-alpha-D-glucosamine + H2O = a UDP-3-O-[(3R)-3-hydroxyacyl]-alpha-D-glucosamine + acetate. The protein operates within glycolipid biosynthesis; lipid IV(A) biosynthesis; lipid IV(A) from (3R)-3-hydroxytetradecanoyl-[acyl-carrier-protein] and UDP-N-acetyl-alpha-D-glucosamine: step 2/6. Its function is as follows. Catalyzes the hydrolysis of UDP-3-O-myristoyl-N-acetylglucosamine to form UDP-3-O-myristoylglucosamine and acetate, the committed step in lipid A biosynthesis. The polypeptide is UDP-3-O-acyl-N-acetylglucosamine deacetylase (Psychrobacter arcticus (strain DSM 17307 / VKM B-2377 / 273-4)).